Reading from the N-terminus, the 233-residue chain is Eukaryotic translation initiation factor 3 subunit G (233 aa).

The RRM domain maps to 152-229; it reads PSIMVSNLSQ…LVLSLEFAKK (78 aa).

It belongs to the eIF-3 subunit G family. In terms of assembly, component of the eukaryotic translation initiation factor 3 (eIF-3) complex.

The protein localises to the cytoplasm. Functionally, RNA-binding component of the eukaryotic translation initiation factor 3 (eIF-3) complex, which is involved in protein synthesis of a specialized repertoire of mRNAs and, together with other initiation factors, stimulates binding of mRNA and methionyl-tRNAi to the 40S ribosome. The eIF-3 complex specifically targets and initiates translation of a subset of mRNAs involved in cell proliferation. This subunit can bind 18S rRNA. The protein is Eukaryotic translation initiation factor 3 subunit G (eif3G) of Dictyostelium discoideum (Social amoeba).